Reading from the N-terminus, the 489-residue chain is Betaine aldehyde dehydrogenase (489 aa).

K(+)-binding residues include T26 and D93. 150–152 lines the NAD(+) pocket; that stretch reads GAW. K162 functions as the Charge relay system in the catalytic mechanism. Residue 176–179 participates in NAD(+) binding; the sequence is KPSE. V180 provides a ligand contact to K(+). NAD(+) is bound at residue 229-232; the sequence is GVET. K(+) is bound at residue L245. E251 (proton acceptor) is an active-site residue. Positions 253, 285, and 386 each coordinate NAD(+). Residue C285 is the Nucleophile of the active site. C285 carries the post-translational modification Cysteine sulfenic acid (-SOH). 2 residues coordinate K(+): K456 and G459. The active-site Charge relay system is the E463.

It belongs to the aldehyde dehydrogenase family. Dimer of dimers. The cofactor is K(+).

The catalysed reaction is betaine aldehyde + NAD(+) + H2O = glycine betaine + NADH + 2 H(+). It participates in amine and polyamine biosynthesis; betaine biosynthesis via choline pathway; betaine from betaine aldehyde: step 1/1. Functionally, involved in the biosynthesis of the osmoprotectant glycine betaine. Catalyzes the irreversible oxidation of betaine aldehyde to the corresponding acid. This is Betaine aldehyde dehydrogenase from Burkholderia lata (strain ATCC 17760 / DSM 23089 / LMG 22485 / NCIMB 9086 / R18194 / 383).